Here is a 341-residue protein sequence, read N- to C-terminus: MKALSKLKAEEGIWMTDVPEPEVGHNDLLIKIRKTAICGTDVHIYNWDEWSQKTIPVPMVVGHEYVGEVVGIGQEVRGFKIGDRVSGEGHITCGHCRNCRAGRTHLCRNTIGVGVNRPGCFAEYLVIPAFNAFKIPDNISDDLASIFDPFGNAVHTALSFDLVGEDVLVSGAGPIGVMAAAVAKHVGARNVVITDVNEYRLELARKMGVTRAVNVAKENLNDVMAELGMTEGFDVGLEMSGAPPAFRSMLDTMNHGGRIAMLGIPPSDMSIDWTKVIFKGLFIKGIYGREMFETWYKMAALIQSGLDLSPIITHRFGIDDFQKGFDAMRSGQSGKVVLSWD.

Cysteine 38 contacts Zn(2+). Catalysis depends on charge relay system residues threonine 40 and histidine 43. Residues histidine 63, glutamate 64, cysteine 93, cysteine 96, cysteine 99, and cysteine 107 each coordinate Zn(2+). Residues isoleucine 175, aspartate 195, arginine 200, 262–264 (LGI), and 286–287 (IY) each bind NAD(+).

The protein belongs to the zinc-containing alcohol dehydrogenase family. As to quaternary structure, homotetramer. Zn(2+) serves as cofactor.

It is found in the cytoplasm. The enzyme catalyses L-threonine + NAD(+) = (2S)-2-amino-3-oxobutanoate + NADH + H(+). It participates in amino-acid degradation; L-threonine degradation via oxydo-reductase pathway; glycine from L-threonine: step 1/2. Functionally, catalyzes the NAD(+)-dependent oxidation of L-threonine to 2-amino-3-ketobutyrate. The polypeptide is L-threonine 3-dehydrogenase (Klebsiella pneumoniae subsp. pneumoniae (strain ATCC 700721 / MGH 78578)).